The chain runs to 378 residues: MPTVASPLPLTTVGSENSSSIYDYDYLDDMTILVCRKDEVLSFGRVFLPVVYSLIFVLGLAGNLLLLVVLLHSAPRRRTMELYLLNLAVSNLLFVVTMPFWAISVAWHWVFGSFLCKVISTLYSINFYCGIFFITCMSLDKYLEIVHAQPLHRPKAQFRNLLLIVMVWITSLAISVPEMVFVQIHQTLDGVWHCYADFGGHATIWKLYLRFQLNLLGFLLPLLAMIFFYSRIGCVLVRLRPPGQGRALRMAAALVIVFFMLWFPYNLTLFLHSLLDLHVFGNCEISHRLDYTLQVTESLAFSHCCFTPVLYAFCSHRFRRYLKAFLSVMLRWHQAPGTPSSNHSESSRVTAQEDVVSMNDLGERQSEDSLNKGEMGNT.

At 1-49 the chain is on the extracellular side; sequence MPTVASPLPLTTVGSENSSSIYDYDYLDDMTILVCRKDEVLSFGRVFLP. Asn17 is a glycosylation site (N-linked (GlcNAc...) asparagine). Residues 50–70 form a helical membrane-spanning segment; it reads VVYSLIFVLGLAGNLLLLVVL. The Cytoplasmic segment spans residues 71-91; the sequence is LHSAPRRRTMELYLLNLAVSN. The helical transmembrane segment at 92 to 112 threads the bilayer; that stretch reads LLFVVTMPFWAISVAWHWVFG. The Extracellular portion of the chain corresponds to 113–117; sequence SFLCK. Cys116 and Cys194 are joined by a disulfide. A helical transmembrane segment spans residues 118–139; that stretch reads VISTLYSINFYCGIFFITCMSL. The Cytoplasmic segment spans residues 140 to 161; that stretch reads DKYLEIVHAQPLHRPKAQFRNL. The chain crosses the membrane as a helical span at residues 162 to 182; the sequence is LLIVMVWITSLAISVPEMVFV. Topologically, residues 183-216 are extracellular; the sequence is QIHQTLDGVWHCYADFGGHATIWKLYLRFQLNLL. The chain crosses the membrane as a helical span at residues 217-237; the sequence is GFLLPLLAMIFFYSRIGCVLV. Over 238-249 the chain is Cytoplasmic; it reads RLRPPGQGRALR. Residues 250-270 traverse the membrane as a helical segment; the sequence is MAAALVIVFFMLWFPYNLTLF. Residues 271-292 are Extracellular-facing; sequence LHSLLDLHVFGNCEISHRLDYT. The helical transmembrane segment at 293-313 threads the bilayer; sequence LQVTESLAFSHCCFTPVLYAF. Over 314–378 the chain is Cytoplasmic; sequence CSHRFRRYLK…SLNKGEMGNT (65 aa). Residues 326-378 are C-terminal cytoplasmic tail; the sequence is LSVMLRWHQAPGTPSSNHSESSRVTAQEDVVSMNDLGERQSEDSLNKGEMGNT.

This sequence belongs to the G-protein coupled receptor 1 family. Atypical chemokine receptor subfamily. Phosphorylated on serine residues in the C-terminal cytoplasmic tail. As to expression, expressed on apoptotic neutrophils (at protein level).

It is found in the early endosome. Its subcellular location is the recycling endosome. The protein resides in the cell membrane. Its function is as follows. Atypical chemokine receptor that controls chemokine levels and localization via high-affinity chemokine binding that is uncoupled from classic ligand-driven signal transduction cascades, resulting instead in chemokine sequestration, degradation, or transcytosis. Also known as interceptor (internalizing receptor) or chemokine-scavenging receptor or chemokine decoy receptor. Acts as a receptor for chemokines including CCL2, CCL3, CCL3L1, CCL4, CCL5, CCL7, CCL8, CCL11, CCL13, CCL17, CCL22, CCL23, CCL24, SCYA2/MCP-1, SCY3/MIP-1-alpha, SCYA5/RANTES and SCYA7/MCP-3. Upon active ligand stimulation, activates a beta-arrestin 1 (ARRB1)-dependent, G protein-independent signaling pathway that results in the phosphorylation of the actin-binding protein cofilin (CFL1) through a RAC1-PAK1-LIMK1 signaling pathway. Activation of this pathway results in up-regulation of ACKR2 from endosomal compartment to cell membrane, increasing its efficiency in chemokine uptake and degradation. By scavenging chemokines in tissues, on the surfaces of lymphatic vessels, and in placenta, plays an essential role in the resolution (termination) of the inflammatory response and in the regulation of adaptive immune responses. Plays a major role in the immune silencing of macrophages during the resolution of inflammation. Acts as a regulator of inflammatory leukocyte interactions with lymphatic endothelial cells (LECs) and is required for immature/mature dendritic cells discrimination by LECs. The polypeptide is Atypical chemokine receptor 2 (Ackr2) (Mus musculus (Mouse)).